A 430-amino-acid chain; its full sequence is Gamma-glutamyl phosphate reductase (430 aa).

Belongs to the gamma-glutamyl phosphate reductase family.

It is found in the cytoplasm. It catalyses the reaction L-glutamate 5-semialdehyde + phosphate + NADP(+) = L-glutamyl 5-phosphate + NADPH + H(+). It participates in amino-acid biosynthesis; L-proline biosynthesis; L-glutamate 5-semialdehyde from L-glutamate: step 2/2. Catalyzes the NADPH-dependent reduction of L-glutamate 5-phosphate into L-glutamate 5-semialdehyde and phosphate. The product spontaneously undergoes cyclization to form 1-pyrroline-5-carboxylate. In Rhodopseudomonas palustris (strain BisA53), this protein is Gamma-glutamyl phosphate reductase.